A 120-amino-acid polypeptide reads, in one-letter code: Seripauperin-2 (120 aa).

A helical membrane pass occupies residues Ile-7–Leu-24.

Belongs to the SRP1/TIP1 family. Seripauperin subfamily.

The protein localises to the membrane. This is Seripauperin-2 (PAU2) from Saccharomyces cerevisiae (strain ATCC 204508 / S288c) (Baker's yeast).